The chain runs to 367 residues: Queuine tRNA-ribosyltransferase (367 aa).

Residue D92 is the Proton acceptor of the active site. Substrate contacts are provided by residues 92–96, D146, Q188, and G215; that span reads DSGGF. The segment at 246-252 is RNA binding; it reads GVGTPKD. The active-site Nucleophile is D265. The Zn(2+) site is built by C303, C305, C308, and H334.

The protein belongs to the queuine tRNA-ribosyltransferase family. In terms of assembly, homodimer. Within each dimer, one monomer is responsible for RNA recognition and catalysis, while the other monomer binds to the replacement base PreQ1. It depends on Zn(2+) as a cofactor.

The enzyme catalyses 7-aminomethyl-7-carbaguanine + guanosine(34) in tRNA = 7-aminomethyl-7-carbaguanosine(34) in tRNA + guanine. It functions in the pathway tRNA modification; tRNA-queuosine biosynthesis. Functionally, catalyzes the base-exchange of a guanine (G) residue with the queuine precursor 7-aminomethyl-7-deazaguanine (PreQ1) at position 34 (anticodon wobble position) in tRNAs with GU(N) anticodons (tRNA-Asp, -Asn, -His and -Tyr). Catalysis occurs through a double-displacement mechanism. The nucleophile active site attacks the C1' of nucleotide 34 to detach the guanine base from the RNA, forming a covalent enzyme-RNA intermediate. The proton acceptor active site deprotonates the incoming PreQ1, allowing a nucleophilic attack on the C1' of the ribose to form the product. After dissociation, two additional enzymatic reactions on the tRNA convert PreQ1 to queuine (Q), resulting in the hypermodified nucleoside queuosine (7-(((4,5-cis-dihydroxy-2-cyclopenten-1-yl)amino)methyl)-7-deazaguanosine). This Francisella tularensis subsp. mediasiatica (strain FSC147) protein is Queuine tRNA-ribosyltransferase.